A 307-amino-acid polypeptide reads, in one-letter code: MATH domain and coiled-coil domain-containing protein At3g58380 (307 aa).

Residues 6–132 (DKKFVWVIKD…CREITIVIEV (127 aa)) enclose the MATH domain. Positions 238 to 290 (KVDWLEKKLKEVKEKKKNVDNGKARLQQIEEDLQKLNQKRLDLKDILDKEKAN) form a coiled coil.

The sequence is that of MATH domain and coiled-coil domain-containing protein At3g58380 from Arabidopsis thaliana (Mouse-ear cress).